The sequence spans 373 residues: Dual-specificity RNA methyltransferase RlmN (373 aa).

Glutamate 94 (proton acceptor) is an active-site residue. In terms of domain architecture, Radical SAM core spans 100–339 (EDDRATLCVS…VTIRKTRGDD (240 aa)). Cysteine 107 and cysteine 344 are disulfide-bonded. Residues cysteine 114, cysteine 118, and cysteine 121 each contribute to the [4Fe-4S] cluster site. S-adenosyl-L-methionine contacts are provided by residues 168–169 (GE), serine 200, 222–224 (SLH), and asparagine 301. Cysteine 344 (S-methylcysteine intermediate) is an active-site residue.

This sequence belongs to the radical SAM superfamily. RlmN family. The cofactor is [4Fe-4S] cluster.

It is found in the cytoplasm. The enzyme catalyses adenosine(2503) in 23S rRNA + 2 reduced [2Fe-2S]-[ferredoxin] + 2 S-adenosyl-L-methionine = 2-methyladenosine(2503) in 23S rRNA + 5'-deoxyadenosine + L-methionine + 2 oxidized [2Fe-2S]-[ferredoxin] + S-adenosyl-L-homocysteine. The catalysed reaction is adenosine(37) in tRNA + 2 reduced [2Fe-2S]-[ferredoxin] + 2 S-adenosyl-L-methionine = 2-methyladenosine(37) in tRNA + 5'-deoxyadenosine + L-methionine + 2 oxidized [2Fe-2S]-[ferredoxin] + S-adenosyl-L-homocysteine. Specifically methylates position 2 of adenine 2503 in 23S rRNA and position 2 of adenine 37 in tRNAs. m2A2503 modification seems to play a crucial role in the proofreading step occurring at the peptidyl transferase center and thus would serve to optimize ribosomal fidelity. This Vibrio cholerae serotype O1 (strain M66-2) protein is Dual-specificity RNA methyltransferase RlmN.